Here is a 1125-residue protein sequence, read N- to C-terminus: MPRAPRCPAVRSLLRSRYREVWPLATFVRRLGLEGSRLVQPGDPKVFRTLVAQCLVCVPWGSQPPPADLSFHQVSSLKELVSRVVQKLCERGERNVLAFGFALLNGARGGPPMAFTTSVHSYLPNSVTESLCVSGAWMLLLSRVGDDLLVYLLSHCALYLLVPPSCAYQVCGSPLYQICATTDTWSSVPAGYRPTRPVGGNFTNLGSAHQIKNSGHQEAPKPQALPSRGTKRLLSLTSTNVPSAKKARFEPALRVDKGPHRQVVPTPSGKTWAPSPAASPKVPPAAKNLSLKGKASDPSLSGSVCCKHKPSSSSLLSSPPQDAEKLRPFTETRHFLYSRGGGQEELNPSFLLNSLPPSLTGARRLVEIIFLGSRPRTSGPFCRTRRLPRRYWQMRPLFQQLLMNHAKCQYVRFLRSHCRFRTANQRVPDAMDTSPSHLTSLLRLHSSPWQVYGFLRACLRELVPAGLWGTRHNERRFLKNVKKFISLGKYAKLSLQELMWRVKVEDCHWLRSSPEKDTVPAAEHRLRERILAMFLFWLMDTYVVQLLRSFFYITETTFQKNRLFFYRKSVWSKLQSIGIRQQLERVQLRELSQEEVKHHQDTWLAMPICRLRFIPKLNGLRPIVNMSYGMDTRAFGKKKQTQCFTQSLKTLFSVLNYERTKHPNLMGASVLGTSDSYRIWRTFVLRVRALDQTPRMYFVKADVTGAYDAIPQDKLVEIVANIIRRSESMYCIRQYAVVQKDSQGQVHKSFRRQVSTLSDLQPYMGQFTKHLQDSDASALRNSVVIEQSISMNETGSSLLHFFLRFVRHSVVKIDGRFYVQCQGIPQGSSLSTLLCSLCFGDMENKLFAEVQQDGLLLRFVDDFLLVTPHLAHAKAFLSTLVHGVPEYGCMINLQKTVVNFPVETGALGGAAPHQLPAHCLFPWCGLLLDTRTLEVFCDYSGYGRTSIKMSLTFQGVSRAGKTMRYKLLSVLRLKCHGLFLDLQVNSLQTVCINIYKIFLLQAYRFHACVIRLPFGQHVRKNHAFFLGIISNLASCCYAILKVKNPGVSLRAKGAPGSFPPEATRWLCYQAFLLKLAAHSVTYKCLLGPLRTAQKQLCRKLPEATMTLLKTAADPALSTDFQTILD.

Residues 1-239 are RNA-interacting domain 1; the sequence is MPRAPRCPAV…TKRLLSLTST (239 aa). Positions 58 to 205 are GQ motif; the sequence is VPWGSQPPPA…RPVGGNFTNL (148 aa). The interval 137–141 is required for regulating specificity for telomeric DNA and for processivity for primer elongation; that stretch reads WMLLL. Polar residues predominate over residues 206-216; it reads GSAHQIKNSGH. Positions 206-304 are disordered; the sequence is GSAHQIKNSG…ASDPSLSGSV (99 aa). The linker stretch occupies residues 240 to 328; sequence NVPSAKKARF…PPQDAEKLRP (89 aa). A compositionally biased stretch (basic and acidic residues) spans 247-259; the sequence is ARFEPALRVDKGP. Residues 273–287 are compositionally biased toward low complexity; sequence APSPAASPKVPPAAK. The interval 306 to 528 is required for oligomerization; the sequence is CKHKPSSSSL…VPAAEHRLRE (223 aa). Residues 329–540 form an RNA-interacting domain 2 region; the sequence is FTETRHFLYS…LAMFLFWLMD (212 aa). The TFLY; involved in RNA binding motif lies at 332–337; sequence TRHFLY. The segment at 381–511 is QFP motif; sequence FCRTRRLPRR…VKVEDCHWLR (131 aa). The interval 402–422 is CP motif; the sequence is LMNHAKCQYVRFLRSHCRFRT. Serine 447 bears the Phosphoserine; by DYRK2 mark. The 334-residue stretch at 595-928 folds into the Reverse transcriptase domain; sequence EVKHHQDTWL…CLFPWCGLLL (334 aa). Tyrosine 697 carries the post-translational modification Phosphotyrosine; by SRC-type Tyr-kinases. Mg(2+) contacts are provided by aspartate 702, aspartate 861, and aspartate 862. The segment at 907 to 921 is required for oligomerization; that stretch reads LGGAAPHQLPAHCLF. Residues 923–927 are primer grip sequence; the sequence is WCGLL. Residues 929 to 1125 are CTE; that stretch reads DTRTLEVFCD…LSTDFQTILD (197 aa).

This sequence belongs to the reverse transcriptase family. Telomerase subfamily. As to quaternary structure, catalytic component of the telomerase holoenzyme complex composed of one molecule of TERT, one molecule of WRAP53/TCAB1, two molecules of H/ACA ribonucleoprotein complex subunits DKC1, NOP10, NHP2 and GAR1, and a telomerase RNA template component (TERC). The telomerase holoenzyme complex is associated with TEP1, SMG6/EST1A and POT1. The molecular chaperone HSP90/P23 complex is required for correct assembly and stabilization of the active telomerase. Interacts directly with HSP90A and PTGES3. Interacts with HSPA1A; the interaction occurs in the absence of TERC and dissociates once the complex has formed. Interacts with RAN; the interaction promotes nuclear export of TERT. Interacts with XPO1. Interacts with PTPN11; the interaction retains TERT in the nucleus. Interacts with NCL (via RRM1 and C-terminal RRM4/Arg/Gly-rich domains); the interaction is important for nucleolar localization of TERT. Interacts with SMARCA4 (via the bromodomain); the interaction regulates Wnt-mediated signaling. Interacts with MCRS1 (isoform MCRS2); the interaction inhibits in vitro telomerase activity. Interacts with PIF1; the interaction has no effect on the elongation activity of TERT. Interacts with PML; the interaction recruits TERT to PML bodies and inhibits telomerase activity. Interacts with GNL3L. Interacts with isoform 1 and isoform 2 of NVL. Interacts with DHX36. Interacts with ATF7. Post-translationally, phosphorylation at Tyr-697 under oxidative stress leads to translocation of TERT to the cytoplasm and reduces its antiapoptotic activity. Dephosphorylated by SHP2/PTPN11 leading to nuclear retention. Phosphorylation at the G2/M phase at Ser-447 by DYRK2 promotes ubiquitination by the EDVP complex and degradation. In terms of processing, ubiquitinated by the EDVP complex, a E3 ligase complex following phosphorylation at Ser-447 by DYRK2. Ubiquitinated leads to proteasomal degradation. As to expression, isoform 1 and isoform 2 expressed in thymus, liver, spleen, lung, kidney and testis. High level of inactive isoform 3 in adult hippocampus, low level in heart, cortex and cerebellum.

The protein resides in the nucleus. It localises to the nucleolus. It is found in the nucleoplasm. The protein localises to the chromosome. Its subcellular location is the telomere. The protein resides in the cytoplasm. It localises to the PML body. It catalyses the reaction DNA(n) + a 2'-deoxyribonucleoside 5'-triphosphate = DNA(n+1) + diphosphate. In terms of biological role, telomerase is a ribonucleoprotein enzyme essential for the replication of chromosome termini in most eukaryotes. Active in progenitor and cancer cells. Inactive, or very low activity, in normal somatic cells. Catalytic component of the teleromerase holoenzyme complex whose main activity is the elongation of telomeres by acting as a reverse transcriptase that adds simple sequence repeats to chromosome ends by copying a template sequence within the RNA component of the enzyme. Catalyzes the RNA-dependent extension of 3'-chromosomal termini with the 6-nucleotide telomeric repeat unit, 5'-TTAGGG-3'. The catalytic cycle involves primer binding, primer extension and release of product once the template boundary has been reached or nascent product translocation followed by further extension. More active on substrates containing 2 or 3 telomeric repeats. Telomerase activity is regulated by a number of factors including telomerase complex-associated proteins, chaperones and polypeptide modifiers. Modulates Wnt signaling. Plays important roles in aging and antiapoptosis. In Rattus norvegicus (Rat), this protein is Telomerase reverse transcriptase.